The chain runs to 160 residues: Prostaglandin E synthase 3 (160 aa).

The CS domain occupies 1–90 (MQPASAKWYD…ESGQSWPRLT (90 aa)). Lys-33 carries the post-translational modification N6-acetyllysine. A Glycyl lysine isopeptide (Lys-Gly) (interchain with G-Cter in SUMO2) cross-link involves residue Lys-35. A Phosphoserine modification is found at Ser-44. A Glycyl lysine isopeptide (Lys-Gly) (interchain with G-Cter in SUMO2) cross-link involves residue Lys-65. Ser-85, Ser-100, Ser-113, Ser-118, Ser-148, and Ser-151 each carry phosphoserine. The disordered stretch occupies residues 124 to 160 (SEMMNNMGGDEDVDLPEVDGADDDSQDSDDEKMPDLE). The segment covering 132 to 153 (GDEDVDLPEVDGADDDSQDSDD) has biased composition (acidic residues). Positions 157–160 (PDLE) match the PXLE motif motif.

The protein belongs to the p23/wos2 family. In terms of assembly, probably forms a complex composed of chaperones HSP90 and HSP70, co-chaperones STIP1/HOP, CDC37, PPP5C, PTGES3/p23, TSC1 and client protein TSC2. Binds to the progesterone receptor. Interacts with TERT; the interaction, together with HSP90AA1, is required for correct assembly and stabilization of the telomerase holoenzyme complex. Interacts (via PXLE motif) with EGLN1/PHD2, recruiting EGLN1/PHD2 to the HSP90 pathway to facilitate HIF alpha proteins hydroxylation. Interacts with HSP90AA1, FLCN, FNIP1 and FNIP2. Proteolytically cleaved by caspase-7 (CASP7) in response to apoptosis, leading to its inactivation. As to expression, detected in testis and ovary, at lower levels in endometrium, myometrium, kidney and lung, and only faintly in spleen, heart and muscle (at protein level). Expressed at high levels in glandular and luminal epithelial cells of the endometrium, but also detected in stromal cells (at protein level).

It localises to the cytoplasm. The catalysed reaction is prostaglandin H2 = prostaglandin E2. Its pathway is lipid metabolism; prostaglandin biosynthesis. Cytosolic prostaglandin synthase that catalyzes the oxidoreduction of prostaglandin endoperoxide H2 (PGH2) to prostaglandin E2 (PGE2). Molecular chaperone that localizes to genomic response elements in a hormone-dependent manner and disrupts receptor-mediated transcriptional activation, by promoting disassembly of transcriptional regulatory complexes. Facilitates HIF alpha proteins hydroxylation via interaction with EGLN1/PHD2, leading to recruit EGLN1/PHD2 to the HSP90 pathway. In Bos taurus (Bovine), this protein is Prostaglandin E synthase 3 (PTGES3).